Here is a 357-residue protein sequence, read N- to C-terminus: Protein pelota homolog (357 aa).

The protein belongs to the eukaryotic release factor 1 family. Pelota subfamily. As to quaternary structure, monomer. Requires a divalent metal cation as cofactor.

Its subcellular location is the cytoplasm. In terms of biological role, may function in recognizing stalled ribosomes, interact with stem-loop structures in stalled mRNA molecules, and effect endonucleolytic cleavage of the mRNA. May play a role in the release non-functional ribosomes and degradation of damaged mRNAs. Has endoribonuclease activity. In Thermococcus gammatolerans (strain DSM 15229 / JCM 11827 / EJ3), this protein is Protein pelota homolog.